The chain runs to 138 residues: uncharacterized protein (138 aa).

The N-terminal stretch at 1–37 is a signal peptide; the sequence is MNSTFTSQPLLNRSEPRVFKEFYRLVIGCNPAWQVMA.

It to H.influenzae HI_1631.

This is an uncharacterized protein from Sinorhizobium fredii (strain NBRC 101917 / NGR234).